Reading from the N-terminus, the 460-residue chain is Probable protein phosphatase 2C 38 (460 aa).

Disordered stretches follow at residues 1–30 (MVAV…AVPS) and 83–111 (RPMR…GRIA). Residues 100 to 109 (PRDREPRDGR) are compositionally biased toward basic and acidic residues. Positions 118-432 (AASLYTMRGN…DDCAVVCLFL (315 aa)) constitute a PPM-type phosphatase domain. The Mn(2+) site is built by Asp154 and Gly155. Residues 192–219 (VTSSMTEGGGTERMDRDTETPLGTEENG) form a disordered region. Positions 201–210 (GTERMDRDTE) are enriched in basic and acidic residues. 2 residues coordinate Mn(2+): Asp377 and Asp423.

It belongs to the PP2C family. It depends on Mg(2+) as a cofactor. Requires Mn(2+) as cofactor.

It carries out the reaction O-phospho-L-seryl-[protein] + H2O = L-seryl-[protein] + phosphate. The catalysed reaction is O-phospho-L-threonyl-[protein] + H2O = L-threonyl-[protein] + phosphate. The polypeptide is Probable protein phosphatase 2C 38 (Oryza sativa subsp. japonica (Rice)).